The primary structure comprises 606 residues: MEPPRGPPANGAEPSRAVGTVKVYLPNKQRTVVTVRDGMSVYDSLDKALKVRGLNQDCCVVYRLIKGRKTVTAWDTAIAPLDGEELIVEVLEDVPLTMHNFVRKTFFSLAFCDFCLKFLFHGFRCQTCGYKFHQHCSSKVPTVCVDMSTNRRQFYHSVQDLSGGSRQHETPSNRPLNEPLTPQGPSSCTQHRDPEHFPFPAPANAPLQRIRSTSTPNVHMVSTTAPMDSGLVQLTAQSFNTDAAGNRGGGDGAPRGSPSPASVSSGRKSPHSKSPSEQRERKSLADDKKKVKNLGYRDSGYYWEVPPSEVQLLKRIGTGSFGTVFRGRWHGDVAVKVLKVAQPTAEQAQAFKNEMQVLRKTRHVNILLFMGFMTRPGFAIITQWCEGSSLYHHLHVADTRFDMVQLIDVARQTAQGMDYLHAKNIIHRDLKSNNIFLHEGLTVKIGDFGLATVKTRWSGAQPLEQPSGSVLWMAAEVIRMQDPNPYSFQSDVYAYGVVLYELMTGSLPYSHIGSRDQIIFMVGRGYLSPDLSKISSNCPKAMRRLLSDCLKFQREERPLFPQILATIELLQRSLPKIERSASEPSLHRTQADELPACLLSAARLVP.

The 73-residue stretch at 19–91 (GTVKVYLPNK…DGEELIVEVL (73 aa)) folds into the RBD domain. The Phorbol-ester/DAG-type zinc-finger motif lies at 98–144 (MHNFVRKTFFSLAFCDFCLKFLFHGFRCQTCGYKFHQHCSSKVPTVC). Zn(2+) is bound by residues His99, Cys112, Cys115, Cys125, Cys128, His133, Cys136, and Cys144. Phosphoserine occurs at positions 157 and 162. Disordered stretches follow at residues 158–207 (VQDL…NAPL) and 241–290 (TDAA…DKKK). Thr181 carries the post-translational modification Phosphothreonine. Ser186, Ser257, and Ser269 each carry phosphoserine. Residues 254 to 267 (PRGSPSPASVSSGR) show a composition bias toward low complexity. A compositionally biased stretch (basic and acidic residues) spans 274–289 (SPSEQRERKSLADDKK). The region spanning 310–570 (VQLLKRIGTG…PQILATIELL (261 aa)) is the Protein kinase domain. ATP contacts are provided by residues 316–324 (IGTGSFGTV) and Lys336. Thr318 bears the Phosphothreonine mark. Catalysis depends on Asp429, which acts as the Proton acceptor.

The protein belongs to the protein kinase superfamily. TKL Ser/Thr protein kinase family. RAF subfamily. In terms of assembly, interacts with TH1L/NELFD. It depends on Zn(2+) as a cofactor. Dephosphorylation by the SHOC2-MRAS-PP1c (SMP) complex consisting of SHOC2, GTP-bound M-Ras/MRAS and the catalytic subunit of protein phosphatase 1 (PPP1CA, PPP1CB or PPP1CC); this relieves inactivation and stimulates kinase activity.

The catalysed reaction is L-seryl-[protein] + ATP = O-phospho-L-seryl-[protein] + ADP + H(+). It carries out the reaction L-threonyl-[protein] + ATP = O-phospho-L-threonyl-[protein] + ADP + H(+). Involved in the transduction of mitogenic signals from the cell membrane to the nucleus. May also regulate the TOR signaling cascade. Phosphorylates PFKFB2. The polypeptide is Serine/threonine-protein kinase A-Raf (ARAF) (Sus scrofa (Pig)).